The sequence spans 393 residues: Reticulon-like protein 2 (393 aa).

Over residues 1–21 the composition is skewed to low complexity; sequence MNRNTTTNKNANLNNSRNANA. Positions 1 to 25 are disordered; it reads MNRNTTTNKNANLNNSRNANAPGEA. Residues 1 to 60 lie on the Cytoplasmic side of the membrane; sequence MNRNTTTNKNANLNNSRNANAPGEAGHQNKTGLIYWTNPSKSGASFAATLVSLLILRNVN. The region spanning 30–236 is the Reticulon domain; the sequence is KTGLIYWTNP…SISNENKSST (207 aa). A helical membrane pass occupies residues 61 to 81; that stretch reads VISVLLKIGYMVLFTSFAVEL. Residues 82–149 lie on the Lumenal side of the membrane; it reads STKVLFDKGV…IGVSLYFLHG (68 aa). Asparagine 137 carries an N-linked (GlcNAc...) asparagine glycan. The chain crosses the membrane as a helical span at residues 150–170; that stretch reads LFAIFSMNTVLIMTTIFLYTV. The Cytoplasmic portion of the chain corresponds to 171 to 393; that stretch reads PLIYDRKQAR…HGLKQKLQHA (223 aa). Disordered regions lie at residues 214 to 313 and 339 to 393; these read IIPP…DVKT and GDYN…LQHA. Residues 220-285 show a composition bias toward polar residues; that stretch reads DEGSYSTSIS…PVSQNENIGT (66 aa). Serine 278 is modified (phosphoserine). Residues 289-313 are compositionally biased toward basic and acidic residues; the sequence is GKQEIPTEKDFNNRHENFSKPDVKT. Polar residues predominate over residues 365 to 376; it reads PAESQSIPIKNN. The segment covering 381–393 has biased composition (basic residues); the sequence is KTTHGLKQKLQHA.

The protein localises to the endoplasmic reticulum membrane. The protein is Reticulon-like protein 2 (RTN2) of Saccharomyces cerevisiae (strain ATCC 204508 / S288c) (Baker's yeast).